The following is a 58-amino-acid chain: Small ribosomal subunit protein bS21 (58 aa).

This sequence belongs to the bacterial ribosomal protein bS21 family.

The protein is Small ribosomal subunit protein bS21 of Synechococcus sp. (strain CC9605).